Here is a 489-residue protein sequence, read N- to C-terminus: Glutamate--tRNA ligase (489 aa).

A 'HIGH' region motif is present at residues 11 to 21; sequence PSPTGHLHIGG. The 'KMSKS' region signature appears at 253-257; it reads KLSKR. Residue Lys256 coordinates ATP.

Belongs to the class-I aminoacyl-tRNA synthetase family. Glutamate--tRNA ligase type 1 subfamily. Monomer.

The protein resides in the cytoplasm. It carries out the reaction tRNA(Glu) + L-glutamate + ATP = L-glutamyl-tRNA(Glu) + AMP + diphosphate. Functionally, catalyzes the attachment of glutamate to tRNA(Glu) in a two-step reaction: glutamate is first activated by ATP to form Glu-AMP and then transferred to the acceptor end of tRNA(Glu). The polypeptide is Glutamate--tRNA ligase (Geobacillus stearothermophilus (Bacillus stearothermophilus)).